We begin with the raw amino-acid sequence, 582 residues long: NudC domain-containing protein 1 (582 aa).

Position 7 is a phosphoserine (Ser7). Residues 272–360 form the CS domain; sequence KVEPLYYWQQ…NEGLMWPELV (89 aa). Phosphoserine is present on Ser387.

It is found in the cytoplasm. Its subcellular location is the nucleus. The sequence is that of NudC domain-containing protein 1 from Mus musculus (Mouse).